The primary structure comprises 286 residues: MKIIGLQSSSSLARKVAEQLHSELVLPEERRFPDGELYVRYDADLNGEDVFIIGNTHTDAEIIEMILSLSAVRDYQVKSVNIIAPYYGYARQHQRYRRGEPISSQIFTEIFASYSTSIATVDIHDEQTLSYSKVRFTDLHADRSIIDFYRHVDIDYVVSPDDGGLQRVKHVAEALGKKYFYIEKKRIDDRTVEMKAPDIDLNGKKVLILDDIISTGGTIAKSSSILRQKGASKIYVSAIHGLFVNSSESKILENADEIHVTDTVAGKFSDISVYQVVCDYIAGKHA.

Residues 34–36 (DGE) and 91–92 (RQ) contribute to the ATP site. Positions 124 and 161 each coordinate Mg(2+). Lys184 is an active-site residue. Residues Arg186, Asp210, and 214–218 (STGGT) contribute to the D-ribose 5-phosphate site.

The protein belongs to the ribose-phosphate pyrophosphokinase family. Class III (archaeal) subfamily. Requires Mg(2+) as cofactor.

The protein resides in the cytoplasm. The enzyme catalyses D-ribose 5-phosphate + ATP = 5-phospho-alpha-D-ribose 1-diphosphate + AMP + H(+). The protein operates within metabolic intermediate biosynthesis; 5-phospho-alpha-D-ribose 1-diphosphate biosynthesis; 5-phospho-alpha-D-ribose 1-diphosphate from D-ribose 5-phosphate (route I): step 1/1. Its function is as follows. Involved in the biosynthesis of the central metabolite phospho-alpha-D-ribosyl-1-pyrophosphate (PRPP) via the transfer of pyrophosphoryl group from ATP to 1-hydroxyl of ribose-5-phosphate (Rib-5-P). The chain is Ribose-phosphate pyrophosphokinase from Thermoplasma acidophilum (strain ATCC 25905 / DSM 1728 / JCM 9062 / NBRC 15155 / AMRC-C165).